Consider the following 48-residue polypeptide: Protein YodE (48 aa).

In Escherichia coli (strain K12), this protein is Protein YodE.